We begin with the raw amino-acid sequence, 90 residues long: Large ribosomal subunit protein uL23c (90 aa).

This sequence belongs to the universal ribosomal protein uL23 family. In terms of assembly, part of the 50S ribosomal subunit.

Its subcellular location is the plastid. It is found in the chloroplast. Binds to 23S rRNA. The sequence is that of Large ribosomal subunit protein uL23c (rpl23) from Oltmannsiellopsis viridis (Marine flagellate).